Consider the following 123-residue polypeptide: Acidic phospholipase A2 (123 aa).

Disulfide bonds link Cys-26-Cys-116, Cys-28-Cys-44, Cys-43-Cys-95, Cys-49-Cys-123, Cys-50-Cys-88, Cys-57-Cys-81, and Cys-75-Cys-86. Tyr-27, Gly-29, and Gly-31 together coordinate Ca(2+). The active site involves His-47. Ca(2+) is bound at residue Asp-48. Residue Asp-89 is part of the active site.

The protein belongs to the phospholipase A2 family. Group II subfamily. D49 sub-subfamily. Homodimer. Requires Ca(2+) as cofactor. Expressed by the venom gland.

It is found in the secreted. It carries out the reaction a 1,2-diacyl-sn-glycero-3-phosphocholine + H2O = a 1-acyl-sn-glycero-3-phosphocholine + a fatty acid + H(+). Its function is as follows. Snake venom phospholipase A2 (PLA2) that inhibits ADP-induced platelet aggregation. PLA2 catalyzes the calcium-dependent hydrolysis of the 2-acyl groups in 3-sn-phosphoglycerides. The protein is Acidic phospholipase A2 of Deinagkistrodon acutus (Hundred-pace snake).